We begin with the raw amino-acid sequence, 692 residues long: Enzymatic polyprotein (692 aa).

Asp-36 serves as the catalytic For protease activity. One can recognise a Reverse transcriptase domain in the interval 227–411 (LKKGLIRESQ…QEIEYLGLKI (185 aa)).

The protein belongs to the caulimoviridae enzymatic polyprotein family.

The catalysed reaction is DNA(n) + a 2'-deoxyribonucleoside 5'-triphosphate = DNA(n+1) + diphosphate. Functionally, encodes for at least two polypeptides: protease (PR) and reverse transcriptase (RT). The protease processes the polyprotein in cis. Reverse transcriptase is multifunctional enzyme that converts the viral RNA genome into dsDNA in viral cytoplasmic capsids. This enzyme displays a DNA polymerase activity that can copy either DNA or RNA templates, and a ribonuclease H (RNase H) activity that cleaves the RNA strand of RNA-DNA heteroduplexes in a partially processive 3'- to 5'-endonucleasic mode. Neo-synthesized pregenomic RNA (pgRNA) are encapsidated, and reverse-transcribed inside the nucleocapsid. Partial (+)DNA is synthesized from the (-)DNA template and generates the relaxed circular DNA (RC-DNA) genome. After budding and infection, the RC-DNA migrates in the nucleus, and is converted into a plasmid-like covalently closed circular DNA (cccDNA). The polypeptide is Enzymatic polyprotein (Soybean chlorotic mottle virus).